A 380-amino-acid chain; its full sequence is Cytochrome b (380 aa).

A run of 4 helical transmembrane segments spans residues 34-54 (FGSL…FLAM), 78-99 (WLLR…YFHI), 114-134 (WNIG…GYVL), and 179-199 (FFTF…INLL). Residues His84 and His98 each contribute to the heme b site. His183 lines the heme b pocket. Residue His202 coordinates a ubiquinone. Helical transmembrane passes span 227–247 (YKDL…STFA), 289–309 (LGGV…PIIH), 321–341 (IAKT…WIGG), and 348–368 (FITI…LLIP).

This sequence belongs to the cytochrome b family. In terms of assembly, the cytochrome bc1 complex contains 3 respiratory subunits (MT-CYB, CYC1 and UQCRFS1), 2 core proteins (UQCRC1 and UQCRC2) and probably 6 low-molecular weight proteins. Heme b serves as cofactor.

It localises to the mitochondrion inner membrane. Component of the ubiquinol-cytochrome c reductase complex (complex III or cytochrome b-c1 complex) that is part of the mitochondrial respiratory chain. The b-c1 complex mediates electron transfer from ubiquinol to cytochrome c. Contributes to the generation of a proton gradient across the mitochondrial membrane that is then used for ATP synthesis. In Pelophylax plancyi (Korean pond frog), this protein is Cytochrome b (mt-cyb).